Consider the following 504-residue polypeptide: MSVQVAAPGSAGLGPERLSPEELVRQTRQVVQGLEALRAEHHGLVGHLAEALAGQGPVTGLEMLEEKQQVVSHSLEAIELGLGEAQVLLALSAHVGALEAEKQRLRSQARRLAQENVWLREELEETQRRLRASEEAVAQLEEEKRHLEFLGQLRQYDPPAESQQSESPPRRDSLASLFPSEEEERKGPEAAGAAAAQQGGYEIPARLRTLHNLVIQYAGQGRYEVAVPLCRQALEDLERSSGHCHPDVATMLNILALVYRDQNKYKEATDLLHDALQIREQTLGPEHPAVAATLNNLAVLYGKRGRYREAEPLCQRALEIREKVLGADHPDVAKQLNNLALLCQNQGKFEDVERHYARALSIYEALGGPHDPNVAKTKNNLASAYLKQNKYQQAEELYKEILHKEDLPAPLGAPNTGTAGDAEQALRRSSSLSKIRESIRRGSEKLVSRLRGEGAAGAAGMKRAMSLNTLNVDAPRALGTQFPSWHLDKAPRTLSASTHDLSPH.

Residues 90–150 (ALSAHVGALE…EEEKRHLEFL (61 aa)) are a coiled coil. Residues 153–197 (LRQYDPPAESQQSESPPRRDSLASLFPSEEEERKGPEAAGAAAAQ) form a disordered region. The span at 158–167 (PPAESQQSES) shows a compositional bias: low complexity. At Ser-173 the chain carries Phosphoserine. TPR repeat units lie at residues 207 to 240 (LRTL…LERS), 249 to 282 (ATML…REQT), 291 to 324 (AATL…REKV), 333 to 366 (AKQL…YEAL), and 375 to 408 (AKTK…EDLP). The disordered stretch occupies residues 411 to 438 (LGAPNTGTAGDAEQALRRSSSLSKIRES). Phosphoserine is present on Ser-466. At Thr-498 the chain carries Phosphothreonine. Ser-502 bears the Phosphoserine mark.

The protein belongs to the kinesin light chain family. Oligomer composed of two heavy chains and two light chains. Associates with microtubulin in an ATP-dependent manner. Interacts with KIF5C. Interacts with ODF1. Interacts with LRGUK. Interacts with VDAC2.

The protein resides in the cytoplasm. It localises to the cytoskeleton. It is found in the mitochondrion. Functionally, kinesin is a microtubule-associated force-producing protein that may play a role in organelle transport. Plays a role during spermiogenesis in the development of the sperm tail midpiece and in the normal function of spermatozoa. May play a role in the formation of the mitochondrial sheath formation in the developing spermatid midpiece. The chain is Kinesin light chain 3 (KLC3) from Pongo abelii (Sumatran orangutan).